The primary structure comprises 151 residues: 3-hydroxyacyl-[acyl-carrier-protein] dehydratase FabZ (151 aa).

The active site involves histidine 56.

Belongs to the thioester dehydratase family. FabZ subfamily.

It localises to the cytoplasm. It catalyses the reaction a (3R)-hydroxyacyl-[ACP] = a (2E)-enoyl-[ACP] + H2O. Involved in unsaturated fatty acids biosynthesis. Catalyzes the dehydration of short chain beta-hydroxyacyl-ACPs and long chain saturated and unsaturated beta-hydroxyacyl-ACPs. This is 3-hydroxyacyl-[acyl-carrier-protein] dehydratase FabZ from Nitrobacter hamburgensis (strain DSM 10229 / NCIMB 13809 / X14).